Reading from the N-terminus, the 350-residue chain is Phosphoribosylformylglycinamidine cyclo-ligase (350 aa).

The protein belongs to the AIR synthase family.

It localises to the cytoplasm. The enzyme catalyses 2-formamido-N(1)-(5-O-phospho-beta-D-ribosyl)acetamidine + ATP = 5-amino-1-(5-phospho-beta-D-ribosyl)imidazole + ADP + phosphate + H(+). Its pathway is purine metabolism; IMP biosynthesis via de novo pathway; 5-amino-1-(5-phospho-D-ribosyl)imidazole from N(2)-formyl-N(1)-(5-phospho-D-ribosyl)glycinamide: step 2/2. This Cupriavidus metallidurans (strain ATCC 43123 / DSM 2839 / NBRC 102507 / CH34) (Ralstonia metallidurans) protein is Phosphoribosylformylglycinamidine cyclo-ligase.